We begin with the raw amino-acid sequence, 384 residues long: MTPQFRNTVERMYRDTFSYNFNNRPILSRRNTVWLCYEVKTKDPSRPPLDAKIFRGQVYSELKYHPEMRFFHWFSKWRKLHRDQEYEVTWYISWSPCTKCTRNVATFLAEDPKVTLTIFVARLYYFWDQDYQEALRSLCQKRDGPRATMKIMNYDEFQHCWSKFVYSQRELFEPWNNLPKYYMLLHIMLGEILRHSMDPPTFTSNFNNEHWVRGRHETYLCYEVERLHNDTWVLLNQRRGFLCNQAPHKHGFLEGRHAELCFLDVIPFWKLDLHQDYRVTCFTSWSPCFSCAQEMAKFISNKKHVSLCIFAARIYDDQGRCQEGLRTLAEAGAKISIMTYSEFKHCWDTFVYHQGCPFQPWDGLEEHSQALSGRLQAILQNQGN.

The segment at 1-60 (MTPQFRNTVERMYRDTFSYNFNNRPILSRRNTVWLCYEVKTKDPSRPPLDAKIFRGQVYS) is essential for cytoplasmic localization. 2 CMP/dCMP-type deaminase domains span residues 29-138 (RRNT…LRSL) and 214-328 (GRHE…LRTL). Phosphothreonine; by PKA is present on threonine 32. Zn(2+) contacts are provided by histidine 65, cysteine 97, and cysteine 100. Positions 209–336 (EHWVRGRHET…TLAEAGAKIS (128 aa)) are necessary for homooligomerization. The interval 213–215 (RGR) is interaction with DNA. Threonine 218 carries the post-translational modification Phosphothreonine; by PKA and CAMK2. Position 257 (histidine 257) interacts with Zn(2+). Glutamate 259 (proton donor) is an active-site residue. Zn(2+) is bound by residues cysteine 288 and cysteine 291. Positions 313–320 (RIYDDQGR) are interaction with DNA.

The protein belongs to the cytidine and deoxycytidylate deaminase family. As to quaternary structure, homodimer. Homooligomer. Can bind RNA to form ribonucleoprotein complexes of high-molecular-mass (HMM) or low-molecular-mass (LMM). HMM is inactive and heterogeneous in protein composition because of binding nonselectively to cellular RNAs, which in turn are associated with variety of cellular proteins. The LMM form which is enzymatically active has few or no RNAs associated. Its ability to form homooligomer is distinct from its ability to assemble into HMM. Interacts with APOBEC3B, APOBEC3F, MOV10, AGO2, EIF4E, EIF4ENIF1, DCP2 and DDX6 in an RNA-dependent manner. Interacts with AGO1, AGO3 and PKA/PRKACA. Zn(2+) is required as a cofactor.

It localises to the cytoplasm. The protein resides in the nucleus. The protein localises to the P-body. The enzyme catalyses a 2'-deoxycytidine in single-stranded DNA + H2O + H(+) = a 2'-deoxyuridine in single-stranded DNA + NH4(+). Functionally, DNA deaminase (cytidine deaminase) which acts as an inhibitor of retrovirus replication and retrotransposon mobility. After the penetration of retroviral nucleocapsids into target cells of infection and the initiation of reverse transcription, it can induce the conversion of cytosine to uracil in the minus-sense single-strand viral DNA, leading to G-to-A hypermutations in the subsequent plus-strand viral DNA. The resultant detrimental levels of mutations in the proviral genome, along with a deamination-independent mechanism that works prior to the proviral integration, together exert efficient antiretroviral effects in infected target cells. Selectively targets single-stranded DNA and does not deaminate double-stranded DNA or single- or double-stranded RNA. The sequence is that of DNA dC-&gt;dU-editing enzyme APOBEC-3G (APOBEC3G) from Gorilla gorilla gorilla (Western lowland gorilla).